A 47-amino-acid polypeptide reads, in one-letter code: Large ribosomal subunit protein bL33A (47 aa).

It belongs to the bacterial ribosomal protein bL33 family.

This chain is Large ribosomal subunit protein bL33A, found in Staphylococcus aureus (strain JH1).